The following is a 124-amino-acid chain: uncharacterized protein (124 aa).

The segment at M1–L28 is disordered. The span at S9–L28 shows a compositional bias: basic and acidic residues.

This is an uncharacterized protein from Mus musculus (Mouse).